A 24-amino-acid polypeptide reads, in one-letter code: Coenzyme PQQ synthesis protein A (24 aa).

A cross-link (pyrroloquinoline quinone (Glu-Tyr)) is located at residues 16–20 (EVTMY).

It belongs to the PqqA family.

Its pathway is cofactor biosynthesis; pyrroloquinoline quinone biosynthesis. Its function is as follows. Required for coenzyme pyrroloquinoline quinone (PQQ) biosynthesis. PQQ is probably formed by cross-linking a specific glutamate to a specific tyrosine residue and excising these residues from the peptide. This is Coenzyme PQQ synthesis protein A from Methylococcus capsulatus (strain ATCC 33009 / NCIMB 11132 / Bath).